The primary structure comprises 185 residues: uncharacterized protein (185 aa).

2 helical membrane-spanning segments follow: residues 1 to 19 and 105 to 125; these read MLNI…TSSA and AGFI…TMDV.

It localises to the membrane. This is an uncharacterized protein from Caenorhabditis elegans.